We begin with the raw amino-acid sequence, 461 residues long: Glycogen synthase (461 aa).

Lys-15 is an ADP-alpha-D-glucose binding site.

The protein belongs to the glycosyltransferase 1 family. Bacterial/plant glycogen synthase subfamily.

The catalysed reaction is [(1-&gt;4)-alpha-D-glucosyl](n) + ADP-alpha-D-glucose = [(1-&gt;4)-alpha-D-glucosyl](n+1) + ADP + H(+). Its pathway is glycan biosynthesis; glycogen biosynthesis. In terms of biological role, synthesizes alpha-1,4-glucan chains using ADP-glucose. This Fusobacterium nucleatum subsp. nucleatum (strain ATCC 25586 / DSM 15643 / BCRC 10681 / CIP 101130 / JCM 8532 / KCTC 2640 / LMG 13131 / VPI 4355) protein is Glycogen synthase.